The primary structure comprises 293 residues: Mycothiol S-conjugate amidase (293 aa).

Zn(2+) is bound by residues His13, Asp16, and His144.

This sequence belongs to the MshB deacetylase family. Mca subfamily. In terms of assembly, monomer. The cofactor is Zn(2+).

The enzyme catalyses mycothiol S-conjugate + H2O = an N-acetyl-L-cysteine-S-conjugate + 1D-myo-inositol 2-amino-2-deoxy-alpha-D-glucopyranoside. In terms of biological role, a mycothiol (MSH, N-acetylcysteinyl-glucosaminyl-inositol) S-conjugate amidase, it recycles conjugated MSH to the N-acetyl cysteine conjugate (AcCys S-conjugate, a mercapturic acid) and the MSH precursor. Involved in MSH-dependent detoxification of a number of alkylating agents and antibiotics. This is Mycothiol S-conjugate amidase from Streptomyces coelicolor (strain ATCC BAA-471 / A3(2) / M145).